The primary structure comprises 360 residues: Phosphoserine aminotransferase (360 aa).

R41 is an L-glutamate binding site. Pyridoxal 5'-phosphate-binding residues include W101, T152, D172, and Q195. An N6-(pyridoxal phosphate)lysine modification is found at K196. 237–238 (NT) is a pyridoxal 5'-phosphate binding site.

Belongs to the class-V pyridoxal-phosphate-dependent aminotransferase family. SerC subfamily. As to quaternary structure, homodimer. Pyridoxal 5'-phosphate serves as cofactor.

It localises to the cytoplasm. It carries out the reaction O-phospho-L-serine + 2-oxoglutarate = 3-phosphooxypyruvate + L-glutamate. The catalysed reaction is 4-(phosphooxy)-L-threonine + 2-oxoglutarate = (R)-3-hydroxy-2-oxo-4-phosphooxybutanoate + L-glutamate. Its pathway is amino-acid biosynthesis; L-serine biosynthesis; L-serine from 3-phospho-D-glycerate: step 2/3. It participates in cofactor biosynthesis; pyridoxine 5'-phosphate biosynthesis; pyridoxine 5'-phosphate from D-erythrose 4-phosphate: step 3/5. Functionally, catalyzes the reversible conversion of 3-phosphohydroxypyruvate to phosphoserine and of 3-hydroxy-2-oxo-4-phosphonooxybutanoate to phosphohydroxythreonine. The chain is Phosphoserine aminotransferase from Burkholderia lata (strain ATCC 17760 / DSM 23089 / LMG 22485 / NCIMB 9086 / R18194 / 383).